We begin with the raw amino-acid sequence, 305 residues long: Homoserine O-acetyltransferase (305 aa).

Catalysis depends on cysteine 142, which acts as the Acyl-thioester intermediate. Substrate-binding residues include lysine 163 and serine 192. Histidine 233 (proton acceptor) is an active-site residue. The active site involves glutamate 235. Position 247 (arginine 247) interacts with substrate.

The protein belongs to the MetA family.

Its subcellular location is the cytoplasm. It catalyses the reaction L-homoserine + acetyl-CoA = O-acetyl-L-homoserine + CoA. It functions in the pathway amino-acid biosynthesis; L-methionine biosynthesis via de novo pathway; O-acetyl-L-homoserine from L-homoserine: step 1/1. In terms of biological role, transfers an acetyl group from acetyl-CoA to L-homoserine, forming acetyl-L-homoserine. In Methanomassiliicoccus intestinalis (strain Issoire-Mx1), this protein is Homoserine O-acetyltransferase.